A 104-amino-acid chain; its full sequence is UPF0145 protein GTNG_1265 (104 aa).

The protein belongs to the UPF0145 family.

The sequence is that of UPF0145 protein GTNG_1265 from Geobacillus thermodenitrificans (strain NG80-2).